Consider the following 168-residue polypeptide: Cilia- and flagella-associated protein 276 (168 aa).

Disordered regions lie at residues 35–61 (AHLA…RDTF) and 149–168 (HTAA…FFST). Residues 38 to 55 (AQQQDPWSRLSSTPTATS) are compositionally biased toward polar residues.

Microtubule inner protein component of sperm flagellar doublet microtubules. Predominantly expressed in nervous system tissues, such as the spinal cord, cerebrum, cerebellum, and sciatic nerve.

The protein localises to the cytoplasm. It is found in the cytoskeleton. It localises to the cilium axoneme. Its subcellular location is the flagellum axoneme. Functionally, microtubule inner protein (MIP) part of the dynein-decorated doublet microtubules (DMTs) in cilia axoneme, which is required for motile cilia beating. May play an important role for the maintenance of myelin-axon integrity. May affect intracellular Ca(2+) homeostasis. The sequence is that of Cilia- and flagella-associated protein 276 from Mus musculus (Mouse).